A 159-amino-acid chain; its full sequence is ATP synthase subunit b (159 aa).

A helical membrane pass occupies residues 7–27; it reads DFIWTLINFFVLLFILKILLY.

It belongs to the ATPase B chain family. As to quaternary structure, F-type ATPases have 2 components, F(1) - the catalytic core - and F(0) - the membrane proton channel. F(1) has five subunits: alpha(3), beta(3), gamma(1), delta(1), epsilon(1). F(0) has three main subunits: a(1), b(2) and c(10-14). The alpha and beta chains form an alternating ring which encloses part of the gamma chain. F(1) is attached to F(0) by a central stalk formed by the gamma and epsilon chains, while a peripheral stalk is formed by the delta and b chains.

The protein localises to the cell membrane. F(1)F(0) ATP synthase produces ATP from ADP in the presence of a proton or sodium gradient. F-type ATPases consist of two structural domains, F(1) containing the extramembraneous catalytic core and F(0) containing the membrane proton channel, linked together by a central stalk and a peripheral stalk. During catalysis, ATP synthesis in the catalytic domain of F(1) is coupled via a rotary mechanism of the central stalk subunits to proton translocation. Functionally, component of the F(0) channel, it forms part of the peripheral stalk, linking F(1) to F(0). The chain is ATP synthase subunit b from Carboxydothermus hydrogenoformans (strain ATCC BAA-161 / DSM 6008 / Z-2901).